The sequence spans 321 residues: Cytochrome c biogenesis protein CcsA (321 aa).

A run of 8 helical transmembrane segments spans residues 12–32 (HISF…LLVY), 45–62 (MIAT…RWIS), 71–91 (LYES…ILYI), 98–117 (LNAI…TSGL), 143–163 (MLLS…LIVI), 227–247 (VISL…VWAN), 260–277 (ETWA…LHTR), and 292–312 (VASI…LLGI).

The protein belongs to the CcmF/CycK/Ccl1/NrfE/CcsA family. In terms of assembly, may interact with Ccs1.

It localises to the plastid. The protein localises to the chloroplast thylakoid membrane. Its function is as follows. Required during biogenesis of c-type cytochromes (cytochrome c6 and cytochrome f) at the step of heme attachment. The protein is Cytochrome c biogenesis protein CcsA of Phalaenopsis aphrodite subsp. formosana (Moth orchid).